The primary structure comprises 288 residues: NAD(P)H-hydrate epimerase (288 aa).

The N-terminal 48 residues, 1-48, are a transit peptide targeting the mitochondrion; that stretch reads MSALRALLGLGLLAAGSRLRRVPGRAGACPAGSAWWEARRPHSGGGGE. The region spanning 65-275 is the YjeF N-terminal domain; sequence AQAVDEELFN…ALEKKYQLNL (211 aa). A (6S)-NADPHX-binding site is contributed by 119–123; that stretch reads NNGGD. N120 serves as a coordination point for K(+). At K144 the chain carries N6-succinyllysine. D185 serves as a coordination point for K(+). Residues 189–195 and D218 contribute to the (6S)-NADPHX site; that span reads GFSFKGD. S221 is a binding site for K(+).

This sequence belongs to the NnrE/AIBP family. Homodimer. Interacts with APOA1 and APOA2. Requires K(+) as cofactor. Post-translationally, undergoes physiological phosphorylation during sperm capacitation, downstream to PKA activation.

Its subcellular location is the mitochondrion. It is found in the secreted. It carries out the reaction (6R)-NADHX = (6S)-NADHX. It catalyses the reaction (6R)-NADPHX = (6S)-NADPHX. Catalyzes the epimerization of the S- and R-forms of NAD(P)HX, a damaged form of NAD(P)H that is a result of enzymatic or heat-dependent hydration. This is a prerequisite for the S-specific NAD(P)H-hydrate dehydratase to allow the repair of both epimers of NAD(P)HX. Accelerates cholesterol efflux from endothelial cells to high-density lipoprotein (HDL) and thereby regulates angiogenesis. The protein is NAD(P)H-hydrate epimerase of Canis lupus familiaris (Dog).